The primary structure comprises 127 residues: Alkaline proteinase inhibitor (127 aa).

A signal peptide spans 1–26; that stretch reads MNINYFVRIVPVAVVLLVGISGASMA. Residues cysteine 53 and cysteine 70 are joined by a disulfide bond.

Belongs to the protease inhibitor I38 family.

The protein resides in the periplasm. Inhibitor of the alkaline protease. This chain is Alkaline proteinase inhibitor (inh), found in Pseudomonas syringae pv. tomato (strain ATCC BAA-871 / DC3000).